Consider the following 208-residue polypeptide: Uracil phosphoribosyltransferase (208 aa).

5-phospho-alpha-D-ribose 1-diphosphate is bound by residues Arg-78, Arg-103, and 130-138 (DPMLATGGS). Uracil-binding positions include Ile-193 and 198–200 (GDA). Position 199 (Asp-199) interacts with 5-phospho-alpha-D-ribose 1-diphosphate.

This sequence belongs to the UPRTase family. Requires Mg(2+) as cofactor.

It catalyses the reaction UMP + diphosphate = 5-phospho-alpha-D-ribose 1-diphosphate + uracil. Its pathway is pyrimidine metabolism; UMP biosynthesis via salvage pathway; UMP from uracil: step 1/1. Allosterically activated by GTP. Catalyzes the conversion of uracil and 5-phospho-alpha-D-ribose 1-diphosphate (PRPP) to UMP and diphosphate. This is Uracil phosphoribosyltransferase from Pectobacterium carotovorum subsp. carotovorum (strain PC1).